We begin with the raw amino-acid sequence, 436 residues long: GTPase Der (436 aa).

EngA-type G domains are found at residues 4-167 (PVIA…PKIE) and 176-351 (IRFS…ESHS). Residues 10 to 17 (GRPNVGKS), 57 to 61 (DTGGI), 119 to 122 (NKVD), 182 to 189 (GRPNVGKS), 229 to 233 (DTAGM), and 294 to 297 (NKWD) contribute to the GTP site. Residues 352-436 (IRVQTNVLND…PIHIIARARD (85 aa)) enclose the KH-like domain.

The protein belongs to the TRAFAC class TrmE-Era-EngA-EngB-Septin-like GTPase superfamily. EngA (Der) GTPase family. Associates with the 50S ribosomal subunit.

GTPase that plays an essential role in the late steps of ribosome biogenesis. The chain is GTPase Der from Bacillus cereus (strain G9842).